Here is a 230-residue protein sequence, read N- to C-terminus: Leucyl/phenylalanyl-tRNA--protein transferase (230 aa).

It belongs to the L/F-transferase family.

Its subcellular location is the cytoplasm. It catalyses the reaction N-terminal L-lysyl-[protein] + L-leucyl-tRNA(Leu) = N-terminal L-leucyl-L-lysyl-[protein] + tRNA(Leu) + H(+). It carries out the reaction N-terminal L-arginyl-[protein] + L-leucyl-tRNA(Leu) = N-terminal L-leucyl-L-arginyl-[protein] + tRNA(Leu) + H(+). The catalysed reaction is L-phenylalanyl-tRNA(Phe) + an N-terminal L-alpha-aminoacyl-[protein] = an N-terminal L-phenylalanyl-L-alpha-aminoacyl-[protein] + tRNA(Phe). Functions in the N-end rule pathway of protein degradation where it conjugates Leu, Phe and, less efficiently, Met from aminoacyl-tRNAs to the N-termini of proteins containing an N-terminal arginine or lysine. This Proteus mirabilis (strain HI4320) protein is Leucyl/phenylalanyl-tRNA--protein transferase.